Here is a 432-residue protein sequence, read N- to C-terminus: Putative D-alanyl-D-alanine carboxypeptidase (432 aa).

Residues 7 to 25 form a helical; Signal-anchor membrane-spanning segment; that stretch reads ATVLLTFSLSAFAVEYPVL.

The protein belongs to the peptidase S12 family. YfeW subfamily.

The protein localises to the cell inner membrane. It carries out the reaction Preferential cleavage: (Ac)2-L-Lys-D-Ala-|-D-Ala. Also transpeptidation of peptidyl-alanyl moieties that are N-acyl substituents of D-alanine.. The chain is Putative D-alanyl-D-alanine carboxypeptidase from Salmonella gallinarum (strain 287/91 / NCTC 13346).